A 454-amino-acid polypeptide reads, in one-letter code: Immediate-early protein ICP-46 homolog (454 aa).

Positions 330–357 (EKDIETIEKYEKTIQELIVELHNLYLKR) form a coiled coil. A disordered region spans residues 428-454 (SSPTASLSSLSPPSSNNNSPIRSPIRM).

This sequence belongs to the IIV-6 393L family.

The polypeptide is Immediate-early protein ICP-46 homolog (Invertebrate iridescent virus 6 (IIV-6)).